A 431-amino-acid polypeptide reads, in one-letter code: Chorismate synthase 2, chloroplastic (431 aa).

Residues Met-1 to Ala-48 constitute a chloroplast transit peptide. The interval Asp-93 to Asp-141 is disordered. The span at Cys-112–Ser-126 shows a compositional bias: polar residues.

It belongs to the chorismate synthase family. Homotetramer. FMNH2 serves as cofactor. As to expression, predominantly expressed in flowers and roots and, to a lesser extent, in stems, leaves, and cotyledons.

It localises to the plastid. Its subcellular location is the chloroplast. It carries out the reaction 5-O-(1-carboxyvinyl)-3-phosphoshikimate = chorismate + phosphate. The protein operates within metabolic intermediate biosynthesis; chorismate biosynthesis; chorismate from D-erythrose 4-phosphate and phosphoenolpyruvate: step 7/7. Its function is as follows. Catalyzes the last common step of the biosynthesis of aromatic amino acids, produced via the shikimic acid pathway. This Solanum lycopersicum (Tomato) protein is Chorismate synthase 2, chloroplastic (CS2).